Here is a 193-residue protein sequence, read N- to C-terminus: Ion-translocating oxidoreductase complex subunit A (193 aa).

Helical transmembrane passes span L5–L25, V39–V59, L72–I92, I102–L122, V134–L154, and I170–L190.

The protein belongs to the NqrDE/RnfAE family. As to quaternary structure, the complex is composed of six subunits: RnfA, RnfB, RnfC, RnfD, RnfE and RnfG.

The protein localises to the cell inner membrane. Functionally, part of a membrane-bound complex that couples electron transfer with translocation of ions across the membrane. The protein is Ion-translocating oxidoreductase complex subunit A of Tolumonas auensis (strain DSM 9187 / NBRC 110442 / TA 4).